The primary structure comprises 226 residues: Ribonuclease 3 (226 aa).

In terms of domain architecture, RNase III spans 7–129; that stretch reads LPRLCRTLGY…IIGAIYLDSD (123 aa). Glu42 serves as a coordination point for Mg(2+). Residue Asp46 is part of the active site. Positions 115 and 118 each coordinate Mg(2+). Glu118 is a catalytic residue. Residues 156-226 form the DRBM domain; sequence DAKTLLQEYL…AAQVLELLKK (71 aa).

Belongs to the ribonuclease III family. Homodimer. Requires Mg(2+) as cofactor.

The protein localises to the cytoplasm. It carries out the reaction Endonucleolytic cleavage to 5'-phosphomonoester.. Functionally, digests double-stranded RNA. Involved in the processing of primary rRNA transcript to yield the immediate precursors to the large and small rRNAs (23S and 16S). Processes some mRNAs, and tRNAs when they are encoded in the rRNA operon. Processes pre-crRNA and tracrRNA of type II CRISPR loci if present in the organism. The protein is Ribonuclease 3 of Shewanella sp. (strain MR-7).